The sequence spans 900 residues: Aldos-2-ulose dehydratase (900 aa).

Residues 1–433 (MYSKVFLKPH…NPSINVFLST (433 aa)) are dehydratase domain. Tyrosine 35 is an ascopyrone M binding site. Positions 101, 103, 105, 107, and 109 each coordinate Mg(2+). Ascopyrone M contacts are provided by tyrosine 116, methionine 120, histidine 155, histidine 215, histidine 295, and histidine 337. Histidine 155 (proton acceptor) is an active-site residue. Residues histidine 215, histidine 295, histidine 337, aspartate 343, aspartate 345, aspartate 347, glutamate 349, and glutamate 351 each coordinate Zn(2+). 3 residues coordinate ascopyrone M: tyrosine 414, tyrosine 419, and alanine 627. An isomerase domain region spans residues 434–739 (GILAERLDEE…EFPGFETFST (306 aa)). 2 residues coordinate 1,5-anhydro-D-fructose: alanine 627 and histidine 630. Residues histidine 630, histidine 632, and glutamate 639 each contribute to the Zn(2+) site. Positions 639 and 641 each coordinate ascopyrone M. 1,5-anhydro-D-fructose is bound at residue histidine 641. Histidine 709 is a binding site for Zn(2+). Position 726 (tryptophan 726) interacts with ascopyrone M. Position 726 (tryptophan 726) interacts with 1,5-anhydro-D-fructose.

Homodimer. Zn(2+) serves as cofactor.

The catalysed reaction is 1,5-anhydro-D-fructose = microthecin + H2O. The enzyme catalyses 1,5-anhydro-D-fructose = ascopyrone M + H2O. It carries out the reaction ascopyrone M = microthecin. It catalyses the reaction 2-dehydro-D-glucose = cortalcerone + H2O. Its pathway is carbohydrate metabolism; 1,5-anhydro-D-fructose degradation. A bifunctional enzyme which catalyzes the dehydration of anhydrofructose into ascopyrone M, and the isomerization of ascopyrone M into microthecin. To a lesser extent, can also act on 2-dehydro-D-glucopyranose (D-glucosone), leading to the antibiotic cortalcerone. The polypeptide is Aldos-2-ulose dehydratase (Phanerodontia chrysosporium (White-rot fungus)).